A 1622-amino-acid chain; its full sequence is Ferredoxin-dependent glutamate synthase 1, chloroplastic/mitochondrial (1622 aa).

Residues 1 to 105 constitute a chloroplast and mitochondrion transit peptide; it reads MAMQSLSPVP…LEDILSERGA (105 aa). C106 (for GATase activity) is an active-site residue. Positions 106–505 constitute a Glutamine amidotransferase type-2 domain; that stretch reads CGVGFIANLD…PGMMIAVDLV (400 aa). 1184 to 1241 contributes to the FMN binding site; sequence LTETHQTLIANGLRERVILRVDGGLKSGVDVLMAAAMGADEYGFGSLAMIATGCVMAR. [3Fe-4S] cluster-binding residues include C1237, C1243, and C1248.

It belongs to the glutamate synthase family. As to quaternary structure, interacts with SHM1. [3Fe-4S] cluster serves as cofactor. It depends on FAD as a cofactor. FMN is required as a cofactor. In terms of tissue distribution, highly expressed in leaves. High expression in the leaf mesophyll and phloem companion cell-sieve element complex.

The protein resides in the plastid. The protein localises to the chloroplast stroma. Its subcellular location is the mitochondrion matrix. The enzyme catalyses 2 oxidized [2Fe-2S]-[ferredoxin] + 2 L-glutamate = L-glutamine + 2 reduced [2Fe-2S]-[ferredoxin] + 2-oxoglutarate + 2 H(+). It participates in amino-acid biosynthesis; L-glutamate biosynthesis via GLT pathway; L-glutamate from 2-oxoglutarate and L-glutamine (ferredoxin route): step 1/1. The protein operates within energy metabolism; nitrogen metabolism. Its function is as follows. Involved in glutamate biosynthesis in leaf. Required for the reassimilation of ammonium ions generated during photorespiration. The sequence is that of Ferredoxin-dependent glutamate synthase 1, chloroplastic/mitochondrial from Arabidopsis thaliana (Mouse-ear cress).